A 157-amino-acid chain; its full sequence is UPF0212 protein rrnAC1165 (157 aa).

Residues 105 to 157 (VLEIEEIPEESDETTEDESSSAESEADADDPPSDQSADESDDVLPEFEELIDE) are disordered. The segment covering 106-157 (LEIEEIPEESDETTEDESSSAESEADADDPPSDQSADESDDVLPEFEELIDE) has biased composition (acidic residues).

This sequence belongs to the UPF0212 family.

The chain is UPF0212 protein rrnAC1165 from Haloarcula marismortui (strain ATCC 43049 / DSM 3752 / JCM 8966 / VKM B-1809) (Halobacterium marismortui).